We begin with the raw amino-acid sequence, 841 residues long: MKNVTIKSFSEEIKIPINKLIQKFADAGITKTNIDYVSLEEKKILLSYINSHHVNLPKNLSLQKKTKSKLNISSLNGKNKIVKIEVRKKKYLKCDSSLLFKDKIVKNNIDKTFCKKNIKDLNKTKKYVELSKNINEREINFEKKLIKEPILDKSKLKISKNLIKKNVKINKNLNIYKKNEFKQNLKKNKLNKKEKNKKIEINYKVKNKNENIFKKIKSNRLFGSETNFFNNNIDKKTNIRKKISSLTHTFNKPLKKIIKEITIGETISVFELSNKMAVKSHKVVSNMMKLGIKSSINEVIDQDIAQIIAEEMGHKVKLIKNNALEEEIIKNQNKNLYELKNRAPVVTIMGHVDHGKTSLLDYIRTTKVALKEKGGITQCIGAYYVKTKKGIITFIDTPGHAAFTEMRIRGSKITDIIVIVIAADDSIMPQTVEAINHAKIAKVPVIIAINKIDKITSNPEKVKKELIKHGIFLEEYGGDTQCLLISAKSGLGIDFLLDAILLQAEILELKAMHKGMASGTVIESRLEKGKGPVSTILIQEGRLHQGDVVLCGCEYGKIKAMQDSFKCKIKSVGPSIPVEILGLSGIPISGDKITVVKEEKKAREVAIYRQNKLRESKLRINKKIKIENVFSNLNLSTKKNINIVLKSDAHGSSQAISNALILLSNEEIKINIIYSGVGPITETDVALATSSNAIIIGFNVKPDFSNIKNTESIGLNIKCCSIIYEIVDFVKQKIYLSCNTKYNKKIIGILIVKNIFQLPKLGSIAGCIVKEGIVKKNSIAKILRNKSFVHESKIISLRRFKEDVNEVKSGTECGIVIKNFNDIKPLDIIEILELEELNKKI.

In terms of domain architecture, tr-type G spans 341-508 (NRAPVVTIMG…AILLQAEILE (168 aa)). Positions 350–357 (GHVDHGKT) are G1. A GTP-binding site is contributed by 350-357 (GHVDHGKT). A G2 region spans residues 375–379 (GITQC). The segment at 396 to 399 (DTPG) is G3. GTP is bound by residues 396 to 400 (DTPGH) and 450 to 453 (NKID). Residues 450-453 (NKID) are G4. Positions 486–488 (SAK) are G5.

This sequence belongs to the TRAFAC class translation factor GTPase superfamily. Classic translation factor GTPase family. IF-2 subfamily.

The protein localises to the cytoplasm. In terms of biological role, one of the essential components for the initiation of protein synthesis. Protects formylmethionyl-tRNA from spontaneous hydrolysis and promotes its binding to the 30S ribosomal subunits. Also involved in the hydrolysis of GTP during the formation of the 70S ribosomal complex. This chain is Translation initiation factor IF-2, found in Wigglesworthia glossinidia brevipalpis.